A 198-amino-acid polypeptide reads, in one-letter code: 7-methyl-GTP pyrophosphatase (198 aa).

The Proton acceptor role is filled by Asp75.

It belongs to the Maf family. YceF subfamily. The cofactor is a divalent metal cation.

Its subcellular location is the cytoplasm. The catalysed reaction is N(7)-methyl-GTP + H2O = N(7)-methyl-GMP + diphosphate + H(+). Its function is as follows. Nucleoside triphosphate pyrophosphatase that hydrolyzes 7-methyl-GTP (m(7)GTP). May have a dual role in cell division arrest and in preventing the incorporation of modified nucleotides into cellular nucleic acids. The protein is 7-methyl-GTP pyrophosphatase of Nitrosospira multiformis (strain ATCC 25196 / NCIMB 11849 / C 71).